The sequence spans 427 residues: L-glutamine:2-deoxy-scyllo-inosose aminotransferase (427 aa).

The disordered stretch occupies residues 1 to 20 (MPLQSSRLAVDNGTPVRGKP). N6-(pyridoxal phosphate)lysine is present on lysine 205.

The protein belongs to the DegT/DnrJ/EryC1 family. L-glutamine:2-deoxy-scyllo-inosose/scyllo-inosose aminotransferase subfamily. Pyridoxal 5'-phosphate is required as a cofactor.

It catalyses the reaction 2-deoxy-L-scyllo-inosose + L-glutamine = 2-deoxy-scyllo-inosamine + 2-oxoglutaramate. The catalysed reaction is 3-amino-2,3-dideoxy-scyllo-inosose + L-glutamine = 2-deoxystreptamine + 2-oxoglutaramate. Its pathway is metabolic intermediate biosynthesis; 2-deoxystreptamine biosynthesis; 2-deoxystreptamine from D-glucose 6-phosphate: step 2/4. It functions in the pathway antibiotic biosynthesis; kanamycin biosynthesis. In terms of biological role, catalyzes the PLP-dependent transamination of 2-deoxy-scyllo-inosose (2-DOI) to form 2-deoxy-scyllo-inosamine (2-DOIA) using L-glutamine as the amino donor. Also catalyzes the transamination of 3-amino-2,3-dideoxy-scyllo-inosose (keto-2-DOIA) into 2-deoxystreptamine (2-DOS). The protein is L-glutamine:2-deoxy-scyllo-inosose aminotransferase (kanB) of Streptomyces kanamyceticus.